The following is a 435-amino-acid chain: Minor fimbrial subunit HifE (435 aa).

The N-terminal stretch at 1 to 31 (MKTLTTYAKYFTPISKIAFLFCFLMGNIAEA) is a signal peptide.

Belongs to the fimbrial protein family.

It localises to the fimbrium. In terms of biological role, may be a minor structural protein required for pilus biogenesis. May be the adhesive component in the pili. In Haemophilus influenzae, this protein is Minor fimbrial subunit HifE (hifE).